The sequence spans 664 residues: Cyclic nucleotide-gated channel alpha-2 (664 aa).

Over residues 1 to 10 (MMTEKSNGVK) the composition is skewed to polar residues. Residues 1 to 51 (MMTEKSNGVKSSPANNHNHHPPPSIKANGKDDHRAGSRPQSVAADDDTSPE) are disordered. Over 1 to 146 (MMTEKSNGVK…PAGDWYYRWL (146 aa)) the chain is Cytoplasmic. A helical transmembrane segment spans residues 147-168 (FVIAMPVLYNWCLLVARACFSD). Over 169–178 (LQRNYFVVWL) the chain is Extracellular. A helical transmembrane segment spans residues 179 to 199 (VLDYFSDTVYIADLIIRLRTG). Residues 200–224 (FLEQGLLVKDPKKLRDNYIHTLQFK) lie on the Cytoplasmic side of the membrane. The chain crosses the membrane as a helical span at residues 225 to 243 (LDVASIIPTDLIYFAVGIH). The Extracellular segment spans residues 244–248 (SPEVR). A helical transmembrane segment spans residues 249–267 (FNRLLHFARMFEFFDRTET). Residues 268 to 274 (RTSYPNI) are Cytoplasmic-facing. The ion conduction pathway stretch occupies residues 272 to 380 (PNIFRISNLV…GNVGSMISNM (109 aa)). Residues 275-298 (FRISNLVLYILVIIHWNACIYYVI) form a helical membrane-spanning segment. The Extracellular segment spans residues 299–321 (SKSIGFGVDTWVYPNITDPEYGY). 2 consecutive transmembrane segments (helical) span residues 322–356 (LAREYIYCLYWSTLTLTTIGETPPPVKDEEYLFVI) and 357–381 (FDFLIGVLIFATIVGNVGSMISNMN). The segment at 339 to 342 (TIGE) is selectivity filter. Residues 382–458 (ATRAEFQAKI…STLKKVRIFQ (77 aa)) are C-linker. Topologically, residues 382–664 (ATRAEFQAKI…INTPEPTAAE (283 aa)) are cytoplasmic. The interval 462–582 (AGLLVELVLK…EERGREILMK (121 aa)) is cyclic nucleotide-binding domain. Gly-522, Ser-525, Arg-538, and Thr-539 together coordinate 3',5'-cyclic GMP. 3',5'-cyclic AMP is bound by residues Arg-538 and Thr-539. The stretch at 599 to 653 (VQEKLEQLETNMDTLYTRFARLLAEYTGAQQKLKQRITVLETKMKQNHEDDYLSD) forms a coiled coil.

The protein belongs to the cyclic nucleotide-gated cation channel (TC 1.A.1.5) family. CNGA2 subfamily. As to quaternary structure, the olfactory cyclic nucleotide-gated channel is an heterotetramer composed of CNGA2, CNGA4 and CNGB1b subunits with 2:1:1 stoichiometry. Olfactory neurons. Widely expressed in brain, enriched in deep cerebellar nuclei, olfactory bulb mitral cells and cerebellar Purkinje neurons. Expressed in olfactory sensory cilia (at protein level).

It localises to the cell projection. The protein resides in the cilium membrane. The enzyme catalyses Ca(2+)(in) = Ca(2+)(out). The catalysed reaction is Na(+)(in) = Na(+)(out). It catalyses the reaction K(+)(in) = K(+)(out). It carries out the reaction NH4(+)(in) = NH4(+)(out). The enzyme catalyses Rb(+)(in) = Rb(+)(out). The catalysed reaction is Li(+)(in) = Li(+)(out). It catalyses the reaction Cs(+)(in) = Cs(+)(out). The channel activity is inhibited by L-cis diltiazem. Functionally, pore-forming subunit of the olfactory cyclic nucleotide-gated channel. Operates in the cilia of olfactory sensory neurons where chemical stimulation of the odorant is converted to an electrical signal. Mediates odorant-induced cAMP-dependent Ca(2+) influx triggering neuron depolarization. The rise of intracellular Ca(2+) levels potentiates the olfactory response by activating Ca(2+)-dependent Cl(-) channels, but it also serves as a negative feedback signal to desensitize the channel for rapid adaptation to odorants. Conducts cAMP- and cGMP-gated ion currents, with permeability for monovalent and divalent cations. This chain is Cyclic nucleotide-gated channel alpha-2, found in Rattus norvegicus (Rat).